Consider the following 426-residue polypeptide: Mannose-1-phosphate guanyltransferase alpha-B (426 aa).

It belongs to the transferase hexapeptide repeat family.

The enzyme catalyses alpha-D-mannose 1-phosphate + GTP + H(+) = GDP-alpha-D-mannose + diphosphate. It functions in the pathway nucleotide-sugar biosynthesis; GDP-alpha-D-mannose biosynthesis; GDP-alpha-D-mannose from alpha-D-mannose 1-phosphate (GTP route): step 1/1. This chain is Mannose-1-phosphate guanyltransferase alpha-B (gmppa-b), found in Xenopus laevis (African clawed frog).